The primary structure comprises 192 residues: Ion-translocating oxidoreductase complex subunit B (192 aa).

The tract at residues Met1–Ser26 is hydrophobic. The 4Fe-4S domain occupies Glu32 to Val91. [4Fe-4S] cluster contacts are provided by Cys49, Cys52, Cys57, Cys74, Cys117, Cys120, Cys123, Cys127, Cys147, Cys150, Cys153, and Cys157. 2 4Fe-4S ferredoxin-type domains span residues Met108–Arg137 and Ala138–Val167.

This sequence belongs to the 4Fe4S bacterial-type ferredoxin family. RnfB subfamily. As to quaternary structure, the complex is composed of six subunits: RsxA, RsxB, RsxC, RsxD, RsxE and RsxG. [4Fe-4S] cluster is required as a cofactor.

Its subcellular location is the cell inner membrane. In terms of biological role, part of a membrane-bound complex that couples electron transfer with translocation of ions across the membrane. Required to maintain the reduced state of SoxR. This is Ion-translocating oxidoreductase complex subunit B from Salmonella newport (strain SL254).